Reading from the N-terminus, the 158-residue chain is Acireductone dioxygenase (158 aa).

Residues H81, H83, E87, and H126 each coordinate Fe(2+). H81, H83, E87, and H126 together coordinate Ni(2+).

Belongs to the acireductone dioxygenase (ARD) family. Fe(2+) serves as cofactor. Ni(2+) is required as a cofactor.

It localises to the cytoplasm. Its subcellular location is the nucleus. It catalyses the reaction 1,2-dihydroxy-5-(methylsulfanyl)pent-1-en-3-one + O2 = 4-methylsulfanyl-2-oxobutanoate + formate + 2 H(+). The enzyme catalyses 1,2-dihydroxy-5-(methylsulfanyl)pent-1-en-3-one + O2 = 3-(methylsulfanyl)propanoate + CO + formate + 2 H(+). It participates in amino-acid biosynthesis; L-methionine biosynthesis via salvage pathway; L-methionine from S-methyl-5-thio-alpha-D-ribose 1-phosphate: step 5/6. Catalyzes 2 different reactions between oxygen and the acireductone 1,2-dihydroxy-3-keto-5-methylthiopentene (DHK-MTPene) depending upon the metal bound in the active site. Fe-containing acireductone dioxygenase (Fe-ARD) produces formate and 2-keto-4-methylthiobutyrate (KMTB), the alpha-ketoacid precursor of methionine in the methionine recycle pathway. Ni-containing acireductone dioxygenase (Ni-ARD) produces methylthiopropionate, carbon monoxide and formate, and does not lie on the methionine recycle pathway. This chain is Acireductone dioxygenase, found in Metarhizium robertsii (strain ARSEF 23 / ATCC MYA-3075) (Metarhizium anisopliae (strain ARSEF 23)).